The sequence spans 546 residues: 2-isopropylmalate synthase (546 aa).

Residues Ile8–Ser271 enclose the Pyruvate carboxyltransferase domain. Mn(2+) contacts are provided by Asp17, His208, His210, and Asn244. The segment at Gln408 to Asn546 is regulatory domain.

It belongs to the alpha-IPM synthase/homocitrate synthase family. LeuA type 1 subfamily. In terms of assembly, homodimer. Requires Mn(2+) as cofactor.

Its subcellular location is the cytoplasm. The enzyme catalyses 3-methyl-2-oxobutanoate + acetyl-CoA + H2O = (2S)-2-isopropylmalate + CoA + H(+). It participates in amino-acid biosynthesis; L-leucine biosynthesis; L-leucine from 3-methyl-2-oxobutanoate: step 1/4. In terms of biological role, catalyzes the condensation of the acetyl group of acetyl-CoA with 3-methyl-2-oxobutanoate (2-ketoisovalerate) to form 3-carboxy-3-hydroxy-4-methylpentanoate (2-isopropylmalate). The chain is 2-isopropylmalate synthase from Prochlorococcus marinus (strain MIT 9301).